Consider the following 324-residue polypeptide: DGAT1/2-independent enzyme synthesizing storage lipids (324 aa).

Over 1 to 50 (MIDKNQTCGVGQDSVPYMICLIHILEEWFGVEQLEDYLNFANYLLWVFTP) the chain is Lumenal. An N-linked (GlcNAc...) asparagine glycan is attached at Asn-5. Residues 51-71 (LILLILPYFTIFLLYLTIIFL) form a helical membrane-spanning segment. At 72 to 125 (HIYKRKNVLKEAYSHNLWDGARKTVATLWDGHAAVWHGYEVHGMEKIPEDGPAL) the chain is on the cytoplasmic side. Residues 126–146 (IIFYHGAIPIDFYYFMAKIFI) form a helical membrane-spanning segment. His-130 is an active-site residue. Residues 147–324 (HKGRTCRVVA…IMSALLERFH (178 aa)) are Lumenal-facing.

The protein belongs to the diacylglycerol acyltransferase family. Highly divergent.

It is found in the endoplasmic reticulum membrane. The enzyme catalyses a 1,2-diacylglycerol + a 1,2-diacyl-sn-glycero-3-phosphocholine = a triacylglycerol + a 1-acyl-sn-glycero-3-phosphocholine. It catalyses the reaction a 1-O-alkyl-2-acyl-sn-glycero-3-phosphocholine + a 1,2-diacylglycerol = a 1-O-alkyl-sn-glycero-3-phosphocholine + a triacylglycerol. It carries out the reaction a 2-acylglycerol + an acyl-CoA = a 1,2-diacylglycerol + CoA. The catalysed reaction is an acyl-CoA + a 1,2-diacyl-sn-glycerol = a triacyl-sn-glycerol + CoA. The enzyme catalyses 2-(9Z-octadecenoyl)-glycerol + (9Z)-octadecenoyl-CoA = 1,2-di-(9Z-octadecenoyl)-glycerol + CoA. It catalyses the reaction 1,2-di-(9Z-octadecenoyl)-sn-glycerol + (9Z)-octadecenoyl-CoA = 1,2,3-tri-(9Z-octadecenoyl)-glycerol + CoA. With respect to regulation, acyltransferase activity is specifically inhibited by TMX1 at the endoplasmic reticulum, restricting accumulation of triacylglycerol. Functionally, catalytic subunit of the alternative triglyceride biosynthesis pathway, which mediates formation of triacylglycerol from diacylglycerol and membrane phospholipids. Synthesizes triacylglycerol at the expense of membrane phospholipids, such as phosphatidylcholine (PC) and its ether-linked form (ePC), thereby altering the composition of membranes. The alternative triglyceride biosynthesis pathway is probably required to provide the energy required for rapid growth when fuel sources are limiting. It maintains mitochondrial function during periods of extracellular lipid starvation. Can also use acyl-CoA as donor: acts as a acyl-CoA:monoacylglycerol acyltransferase (MGAT), but also shows acyl-CoA:diacylglycerol acyltransferase (DGAT) activity. The chain is DGAT1/2-independent enzyme synthesizing storage lipids from Homo sapiens (Human).